The sequence spans 205 residues: Protein-L-isoaspartate O-methyltransferase (205 aa).

Residue serine 56 is part of the active site.

This sequence belongs to the methyltransferase superfamily. L-isoaspartyl/D-aspartyl protein methyltransferase family.

The protein localises to the cytoplasm. It catalyses the reaction [protein]-L-isoaspartate + S-adenosyl-L-methionine = [protein]-L-isoaspartate alpha-methyl ester + S-adenosyl-L-homocysteine. In terms of biological role, catalyzes the methyl esterification of L-isoaspartyl residues in peptides and proteins that result from spontaneous decomposition of normal L-aspartyl and L-asparaginyl residues. It plays a role in the repair and/or degradation of damaged proteins. The protein is Protein-L-isoaspartate O-methyltransferase of Pyrobaculum aerophilum (strain ATCC 51768 / DSM 7523 / JCM 9630 / CIP 104966 / NBRC 100827 / IM2).